Consider the following 1196-residue polypeptide: NACHT, LRR and PYD domains-containing protein 1b allele 5 (1196 aa).

Positions 1 to 22 are disordered; the sequence is MEESPPKQKSNTKVTQHEGQQD. The 310-residue stretch at 126–435 folds into the NACHT domain; the sequence is QLVIIEGAAG…EFFAAISCIL (310 aa). 132 to 139 is an ATP binding site; that stretch reads GAAGIGKS. 2 LRR repeats span residues 627 to 647 and 684 to 704; these read NLEG…QSLC and SLTE…RMLC. The segment at 789 to 922 is ZU5; the sequence is FWGPTGPVAT…GYTVLKNPSF (134 aa). Residues 789-1072 form the FIIND domain; the sequence is FWGPTGPVAT…KFDHLCDQEF (284 aa). Positions 923–1072 are UPA; the sequence is SPMGVVLRII…KFDHLCDQEF (150 aa). Residues 1106-1189 form the CARD domain; sequence HFMDQHREQL…HLVMDLFEKS (84 aa).

Belongs to the NLRP family. Interacts with DPP9; leading to inhibit activation of the inflammasome. DPP9 acts via formation of a ternary complex, composed of a DPP9 homodimer, one full-length Nlrp1b protein, and one cleaved C-terminus of Nlrp1b (NACHT, LRR and PYD domains-containing protein 1b, C-terminus). Interacts with DPP8; leading to inhibit activation of the inflammasome, probably via formation of a ternary complex with DPP8. Interacts (via LRR repeats) with BCL2 and BCL2L1 (via the loop between motifs BH4 and BH3). Interacts with NOD2; this interaction may increase IL1B release. Interacts with EIF2AK2/PKR; this interaction requires EIF2AK2 activity, is accompanied by EIF2AK2 autophosphorylation and promotes inflammasome assembly in response to B.anthracis lethal toxin. Interacts with MEFV; this interaction targets Nlrp1b to degradation by autophagy, hence preventing excessive IL1B- and IL18-mediated inflammation. In terms of assembly, interacts with the C-terminal part of Nlrp1b (NACHT, LRR and PYD domains-containing protein 1b, C-terminus) in absence of pathogens and other damage-associated signals. As to quaternary structure, interacts with the N-terminal part of Nlrp1b (NACHT, LRR and PYD domains-containing protein 1b, N-terminus) in absence of pathogens and other damage-associated signals. Homomultimer; forms the Nlrp1b inflammasome polymeric complex, a filament composed of homopolymers of this form in response to pathogens and other damage-associated signals. The Nlrp1b inflammasome polymeric complex directly recruits pro-caspase-1 (proCASP1) independently of PYCARD/ASC. Interacts (via CARD domain) with CASP1 (via CARD domain); leading to CASP1 activation. Autocatalytically cleaved. Autocatalytic cleavage in FIIND region occurs constitutively, prior to activation signals, and is required for inflammasome activity (IL1B release), possibly by facilitating CASP1 binding. Both N- and C-terminal parts remain associated non-covalently. In terms of processing, ubiquitinated by the N-end rule pathway in response to pathogens and other damage-associated signals, leading to its degradation by the proteasome and subsequent release of the cleaved C-terminal part of the protein (NACHT, LRR and PYD domains-containing protein 1b, C-terminus), which polymerizes and forms the Nlrp1b inflammasome. Post-translationally, (Microbial infection) Cleavage by B.anthracis lethal toxin (LT) endopeptidase promotes ubiquitination and degradation of the N-terminal part, releasing the cleaved C-terminal part of the protein (NACHT, LRR and PYD domains-containing protein 1b, C-terminus), which polymerizes and forms the Nlrp1b inflammasome. In terms of tissue distribution, expressed in macrophages.

It localises to the cytoplasm. The protein localises to the cytosol. The protein resides in the inflammasome. Its activity is regulated as follows. Activated by cleavage by B.anthracis lethal toxin (LT) endopeptidase. Cleavage by LT promotes ubiquitination and degradation of the N-terminal part, releasing the cleaved C-terminal part of the protein (NACHT, LRR and PYD domains-containing protein 1b, C-terminus), which polymerizes and forms the Nlrp1b inflammasome. Nlrp1b inflammasome is inhibited by DPP8 and DPP9, which sequester the C-terminal fragment of Nlrp1b (NACHT, LRR and PYD domains-containing protein 1b, C-terminus) in a ternary complex, thereby preventing Nlrp1b oligomerization and activation. Nlrp1b inflammasome is activated by Val-boroPro (Talabostat, PT-100), an inhibitor of dipeptidyl peptidases DPP8 and DPP9. Val-boroPro relieves inhibition of DPP8 and/or DPP9 by promoting disruption of the ternary complex, releasing its C-terminal part from autoinhibition. Activated by metabolic inhibitors, such as 2-deoxy-D-glucose and sodium azide. Not activated by muramyl dipeptide, nor by full-length bacterial peptidoglycan. Its function is as follows. Acts as the sensor component of the Nlrp1b inflammasome, which mediates inflammasome activation in response to various pathogen-associated signals, leading to subsequent pyroptosis. Inflammasomes are supramolecular complexes that assemble in the cytosol in response to pathogens and other damage-associated signals and play critical roles in innate immunity and inflammation. Acts as a recognition receptor (PRR): recognizes specific pathogens and other damage-associated signals, such as B.anthracis lethal toxin (LT) or Val-boroPro inhibitor, and mediates the formation of the inflammasome polymeric complex. In response to pathogen-associated signals, the N-terminal part of Nlrp1b is degraded by the proteasome, releasing the cleaved C-terminal part of the protein (NACHT, LRR and PYD domains-containing protein 1b, C-terminus), which polymerizes to initiate the formation of the inflammasome complex: the inflammasome directly recruits pro-caspase-1 (proCASP1) independently of PYCARD/ASC and promotes caspase-1 (CASP1) activation, which subsequently cleaves and activates inflammatory cytokines IL1B and IL18 and gasdermin-D (GSDMD), leading to pyroptosis. In the absence of GSDMD expression, the Nlrp1b inflammasome is able to recruit and activate CASP8, leading to activation of gasdermin-E (GSDME). Activation of Nlrp1b inflammasome is also required for HMGB1 secretion; the active cytokines and HMGB1 stimulate inflammatory responses. Primary mediator of macrophage susceptibility to B.anthracis LT: in response to B.anthracis infection, macrophages and dendritic cells release IL1B and undergo pyroptosis. This early inflammatory response to the toxin increases resistance to infection by B.anthracis spores. Functionally, constitutes the precursor of the Nlrp1b inflammasome, which mediates autoproteolytic processing within the FIIND domain to generate the N-terminal and C-terminal parts, which are associated non-covalently in absence of pathogens and other damage-associated signals. In terms of biological role, regulatory part that prevents formation of the Nlrp1b inflammasome: in absence of pathogens and other damage-associated signals, interacts with the C-terminal part of Nlrp1b (NACHT, LRR and PYD domains-containing protein 1b, C-terminus), preventing activation of the Nlrp1b inflammasome. In response to pathogen-associated signals, this part is ubiquitinated by the N-end rule pathway and degraded by the proteasome, releasing the cleaved C-terminal part of the protein, which polymerizes and forms the Nlrp1b inflammasome. Constitutes the active part of the Nlrp1b inflammasome. In absence of pathogens and other damage-associated signals, interacts with the N-terminal part of Nlrp1b (NACHT, LRR and PYD domains-containing protein 1b, N-terminus), preventing activation of the Nlrp1b inflammasome. In response to pathogen-associated signals, the N-terminal part of Nlrp1b is degraded by the proteasome, releasing this form, which polymerizes to form the Nlrp1b inflammasome complex: the Nlrp1b inflammasome complex then directly recruits pro-caspase-1 (proCASP1) and promotes caspase-1 (CASP1) activation, leading to gasdermin-D (GSDMD) cleavage and subsequent pyroptosis. The polypeptide is NACHT, LRR and PYD domains-containing protein 1b allele 5 (Nlrp1b) (Mus musculus (Mouse)).